A 160-amino-acid polypeptide reads, in one-letter code: AP-1 complex subunit sigma-2 (160 aa).

It belongs to the adaptor complexes small subunit family. Adaptor protein complex 1 (AP-1) is a heterotetramer composed of two large adaptins (gamma-type subunit AP1G1 and beta-type subunit AP1B1), a medium adaptin (mu-type subunit AP1M1 or AP1M2) and a small adaptin (sigma-type subunit AP1S1 or AP1S2 or AP1S3). Binds to MUC1. As to expression, widely expressed.

It is found in the golgi apparatus. The protein localises to the cytoplasmic vesicle membrane. Its subcellular location is the membrane. The protein resides in the clathrin-coated pit. Its function is as follows. Subunit of clathrin-associated adaptor protein complex 1 that plays a role in protein sorting in the late-Golgi/trans-Golgi network (TGN) and/or endosomes. The AP complexes mediate both the recruitment of clathrin to membranes and the recognition of sorting signals within the cytosolic tails of transmembrane cargo molecules. In Mus musculus (Mouse), this protein is AP-1 complex subunit sigma-2 (Ap1s2).